Here is a 1269-residue protein sequence, read N- to C-terminus: DNA-directed RNA polymerase subunit beta (1269 aa).

This sequence belongs to the RNA polymerase beta chain family. As to quaternary structure, the RNAP catalytic core consists of 2 alpha, 1 beta, 1 beta' and 1 omega subunit. When a sigma factor is associated with the core the holoenzyme is formed, which can initiate transcription.

The enzyme catalyses RNA(n) + a ribonucleoside 5'-triphosphate = RNA(n+1) + diphosphate. Its function is as follows. DNA-dependent RNA polymerase catalyzes the transcription of DNA into RNA using the four ribonucleoside triphosphates as substrates. The sequence is that of DNA-directed RNA polymerase subunit beta from Porphyromonas gingivalis (strain ATCC BAA-308 / W83).